A 1269-amino-acid chain; its full sequence is Rho GTPase-activating protein 29 (1269 aa).

Serine 171, serine 176, serine 179, and serine 190 each carry phosphoserine. An F-BAR domain is found at 192-462 (IELDSMLLKN…SAKLYDPGQE (271 aa)). Residues 296–418 (RKNEMEKQRK…EILTQLRKLV (123 aa)) adopt a coiled-coil conformation. Disordered stretches follow at residues 472–523 (SAEE…NSAD) and 540–599 (DSES…NSLG). Phosphoserine is present on residues serine 499, serine 519, and serine 552. A compositionally biased stretch (low complexity) spans 540 to 559 (DSESTGGSSESRSLDSESIS). The Phorbol-ester/DAG-type zinc finger occupies 612 to 657 (THKFRKLRSPTKCRDCEGIVVFHGVECEECLLVCHRKCLENLVIIC). The Rho-GAP domain maps to 671–886 (AEFTQVAKKE…FLITYSQKIF (216 aa)). Residues 909–936 (PGYLPKSLLSPEERDPERSMKSLFFSSK) form a disordered region. A Phosphoserine modification is found at serine 918. Residues 919–928 (PEERDPERSM) show a composition bias toward basic and acidic residues. 2 positions are modified to phosphoserine: serine 954 and serine 1026. Residues 1120-1269 (RSSGDHPVSI…DLEDEIPQFV (150 aa)) form a disordered region. Polar residues predominate over residues 1128–1145 (SITQPSKPYTEPVRSTRQ). A phosphoserine mark is found at serine 1152 and serine 1154. Positions 1162–1172 (TPRTLQPQHWT) are enriched in polar residues. The span at 1229–1241 (SRPEEKAEERDQP) shows a compositional bias: basic and acidic residues. The span at 1259–1269 (EDLEDEIPQFV) shows a compositional bias: acidic residues. Residues 1266 to 1269 (PQFV) are interaction with PTPN13/PTPL1.

As to quaternary structure, interacts with PTPN13/PTPL1. Interacts with RAP2A via its coiled coil domain. Interacts with RASIP1.

In terms of biological role, GTPase activator for the Rho-type GTPases by converting them to an inactive GDP-bound state. Has strong activity toward RHOA, and weaker activity toward RAC1 and CDC42. May act as a specific effector of RAP2A to regulate Rho. In concert with RASIP1, suppresses RhoA signaling and dampens ROCK and MYH9 activities in endothelial cells and plays an essential role in blood vessel tubulogenesis. The chain is Rho GTPase-activating protein 29 (ARHGAP29) from Bos taurus (Bovine).